A 329-amino-acid chain; its full sequence is Beta-ketoacyl-[acyl-carrier-protein] synthase III (329 aa).

Catalysis depends on residues C123 and H256. The segment at 257–261 is ACP-binding; that stretch reads QANIR. Residue N286 is part of the active site.

Belongs to the thiolase-like superfamily. FabH family. Homodimer.

The protein resides in the cytoplasm. The enzyme catalyses malonyl-[ACP] + acetyl-CoA + H(+) = 3-oxobutanoyl-[ACP] + CO2 + CoA. It participates in lipid metabolism; fatty acid biosynthesis. Catalyzes the condensation reaction of fatty acid synthesis by the addition to an acyl acceptor of two carbons from malonyl-ACP. Catalyzes the first condensation reaction which initiates fatty acid synthesis and may therefore play a role in governing the total rate of fatty acid production. Possesses both acetoacetyl-ACP synthase and acetyl transacylase activities. Its substrate specificity determines the biosynthesis of branched-chain and/or straight-chain of fatty acids. This Burkholderia thailandensis (strain ATCC 700388 / DSM 13276 / CCUG 48851 / CIP 106301 / E264) protein is Beta-ketoacyl-[acyl-carrier-protein] synthase III.